We begin with the raw amino-acid sequence, 352 residues long: MRIELLNTPPDAAESRFEEQIRPIRMEDFAGQQRLTDNLKVFISAAKMRGDALDHVLLSGPPGLGKTTLAYIIASEMGSSIKATSGPLLDKAGNLAGLLTGLQKGDILFIDEIHRMPPMVEEYLYSAMEDFRIDIMLDSGPSARAVQLRIEPFTLVGATTRSGLLTSPLRARFGINSRFDYYEPELLTRIIIRASSILGIGIEPDAAAEIAGRSRGTPRIANRLLRRARDFAQVDGISTITRTIAMKTLECLEIDEEGLDEMDKKIMDTIVNKFSGGPVGIASLAVSVGEERDTIEEVYEPYLIQAGYLARTTRGRVATRKAFSRFADHTLLGGNFGGHKGSLPLFDESEAD.

Positions 1-182 (MRIELLNTPP…FGINSRFDYY (182 aa)) are large ATPase domain (RuvB-L). ATP contacts are provided by residues isoleucine 21, arginine 22, glycine 63, lysine 66, threonine 67, threonine 68, 129-131 (EDF), arginine 172, tyrosine 182, and arginine 219. A Mg(2+)-binding site is contributed by threonine 67. The small ATPAse domain (RuvB-S) stretch occupies residues 183 to 253 (EPELLTRIII…IAMKTLECLE (71 aa)). The interval 256–352 (EEGLDEMDKK…LPLFDESEAD (97 aa)) is head domain (RuvB-H). Arginine 292, arginine 311, and arginine 316 together coordinate DNA.

Belongs to the RuvB family. In terms of assembly, homohexamer. Forms an RuvA(8)-RuvB(12)-Holliday junction (HJ) complex. HJ DNA is sandwiched between 2 RuvA tetramers; dsDNA enters through RuvA and exits via RuvB. An RuvB hexamer assembles on each DNA strand where it exits the tetramer. Each RuvB hexamer is contacted by two RuvA subunits (via domain III) on 2 adjacent RuvB subunits; this complex drives branch migration. In the full resolvosome a probable DNA-RuvA(4)-RuvB(12)-RuvC(2) complex forms which resolves the HJ.

Its subcellular location is the cytoplasm. It carries out the reaction ATP + H2O = ADP + phosphate + H(+). Its function is as follows. The RuvA-RuvB-RuvC complex processes Holliday junction (HJ) DNA during genetic recombination and DNA repair, while the RuvA-RuvB complex plays an important role in the rescue of blocked DNA replication forks via replication fork reversal (RFR). RuvA specifically binds to HJ cruciform DNA, conferring on it an open structure. The RuvB hexamer acts as an ATP-dependent pump, pulling dsDNA into and through the RuvAB complex. RuvB forms 2 homohexamers on either side of HJ DNA bound by 1 or 2 RuvA tetramers; 4 subunits per hexamer contact DNA at a time. Coordinated motions by a converter formed by DNA-disengaged RuvB subunits stimulates ATP hydrolysis and nucleotide exchange. Immobilization of the converter enables RuvB to convert the ATP-contained energy into a lever motion, pulling 2 nucleotides of DNA out of the RuvA tetramer per ATP hydrolyzed, thus driving DNA branch migration. The RuvB motors rotate together with the DNA substrate, which together with the progressing nucleotide cycle form the mechanistic basis for DNA recombination by continuous HJ branch migration. Branch migration allows RuvC to scan DNA until it finds its consensus sequence, where it cleaves and resolves cruciform DNA. This is Holliday junction branch migration complex subunit RuvB from Chlorobium chlorochromatii (strain CaD3).